The sequence spans 749 residues: Amyloid-beta A4 precursor protein-binding family A member 2 (749 aa).

3 disordered regions span residues methionine 1–glutamate 94, aspartate 130–glutamate 220, and serine 238–glutamate 344. A Phosphoserine modification is found at serine 11. A compositionally biased stretch (polar residues) spans glycine 70–threonine 80. Composition is skewed to acidic residues over residues serine 81–glutamate 94 and threonine 131–threonine 142. The tract at residues histidine 185–alanine 270 is STXBP1-binding. The residue at position 208 (serine 208) is a Phosphoserine. Positions serine 238–glutamate 247 are enriched in polar residues. Positions arginine 305–histidine 315 are enriched in basic and acidic residues. The PID domain maps to aspartate 368–aspartate 555. 2 consecutive PDZ domains span residues glutamate 568–cysteine 654 and threonine 659–alanine 734.

In terms of assembly, part of a multimeric complex containing STXBP1 and syntaxin-1. Binds to the cytoplasmic domain of amyloid-beta protein, and to the nuclear factor NF-kappa-B/p65 via its PDZ domain. Interacts with the N-terminal domain of NECAB3. As to expression, brain.

Putative function in synaptic vesicle exocytosis by binding to STXBP1, an essential component of the synaptic vesicle exocytotic machinery. May modulate processing of the amyloid-beta precursor protein (APP) and hence formation of APP-beta. The protein is Amyloid-beta A4 precursor protein-binding family A member 2 (APBA2) of Homo sapiens (Human).